The sequence spans 70 residues: Large ribosomal subunit protein bL31 (70 aa).

Residues Cys-16, Cys-18, Cys-37, and Cys-40 each contribute to the Zn(2+) site.

Belongs to the bacterial ribosomal protein bL31 family. Type A subfamily. In terms of assembly, part of the 50S ribosomal subunit. Zn(2+) is required as a cofactor.

In terms of biological role, binds the 23S rRNA. In Shewanella halifaxensis (strain HAW-EB4), this protein is Large ribosomal subunit protein bL31.